A 465-amino-acid polypeptide reads, in one-letter code: MAKTLYQKVFEAHVVYEAAGETPIIYIDRHLVHEVTSPQAFDGLREKGRKVRRTDRTWATMDHNVSTTSNDINASGEMARVQMQTLMKNTDDFGVPLYGLNHKWQGIVHVMGPEIGLTLPGTTIVCGDSHTATHGAFGALAFGIGTSEVEHVLATQTLKQSRAKTMKIEVTGKVGPGVTAKDIVLAIIGKTGTAGGTGYVVEFCGTAIQALTMEERMTVCNMAIELGAKAGMVAADQTTFDYLKGRPFAPKGADWDAAVEYWSTLKTDAGAKFDAELVLDGAAIEPQVTWGTNPGQVISINTPIPAPEDFADPVARSSAQKALEYMALTAGQKLSDVKIDKAFIGSCTNGRIEDIRAAAAVAKGRKVAPGVQALVVPGSQQVKAQAEAEGLDKILTEAGFEWRLPGCSMCLAMNNDRLEPGERCAATSNRNFEGRQGRGGRTHLVSPAMAAAAAITGHFVDVREL.

3 residues coordinate [4Fe-4S] cluster: cysteine 347, cysteine 407, and cysteine 410.

Belongs to the aconitase/IPM isomerase family. LeuC type 1 subfamily. Heterodimer of LeuC and LeuD. [4Fe-4S] cluster serves as cofactor.

The catalysed reaction is (2R,3S)-3-isopropylmalate = (2S)-2-isopropylmalate. Its pathway is amino-acid biosynthesis; L-leucine biosynthesis; L-leucine from 3-methyl-2-oxobutanoate: step 2/4. Functionally, catalyzes the isomerization between 2-isopropylmalate and 3-isopropylmalate, via the formation of 2-isopropylmaleate. The sequence is that of 3-isopropylmalate dehydratase large subunit from Tolumonas auensis (strain DSM 9187 / NBRC 110442 / TA 4).